Consider the following 342-residue polypeptide: Non-homologous end-joining protein 1 (342 aa).

The next 2 membrane-spanning stretches (helical) occupy residues Leu-27–Leu-47 and Met-129–Thr-149. Residues Leu-173–Asn-342 form an interaction with LIF1 region. Residues Ala-270–Asn-342 form a disordered region. A compositionally biased stretch (basic and acidic residues) spans Pro-286–Glu-296. Positions Ser-297 to Glu-312 are enriched in polar residues. The segment covering Lys-331–Asn-342 has biased composition (basic residues).

The protein belongs to the XRCC4-XLF family. XLF subfamily. As to quaternary structure, interacts (via C-terminus) with LIF1 (via N-terminus); the interaction is direct. Interacts with DNL4.

Its subcellular location is the cytoplasm. It is found in the nucleus membrane. Functionally, involved in non-homologous end joining (NHEJ). Facilitates the transport of LIF1 into the nucleus, where it can interact with DNA ligase DNL4 to repair double-strand breaks (DSB). Mediates mating-type regulation of NHEJ. Prevents chromosome circularisation by NHEJ in absence of telomerase. The chain is Non-homologous end-joining protein 1 (NEJ1) from Saccharomyces cerevisiae (strain ATCC 204508 / S288c) (Baker's yeast).